The sequence spans 305 residues: Sulfate adenylyltransferase subunit 2 (305 aa).

This sequence belongs to the PAPS reductase family. CysD subfamily. Heterodimer composed of CysD, the smaller subunit, and CysN.

It catalyses the reaction sulfate + ATP + H(+) = adenosine 5'-phosphosulfate + diphosphate. It functions in the pathway sulfur metabolism; hydrogen sulfide biosynthesis; sulfite from sulfate: step 1/3. With CysN forms the ATP sulfurylase (ATPS) that catalyzes the adenylation of sulfate producing adenosine 5'-phosphosulfate (APS) and diphosphate, the first enzymatic step in sulfur assimilation pathway. APS synthesis involves the formation of a high-energy phosphoric-sulfuric acid anhydride bond driven by GTP hydrolysis by CysN coupled to ATP hydrolysis by CysD. The polypeptide is Sulfate adenylyltransferase subunit 2 (Pseudomonas fluorescens (strain SBW25)).